Here is a 284-residue protein sequence, read N- to C-terminus: Transcription factor lir-3 (284 aa).

The span at 50-60 shows a compositional bias: basic and acidic residues; that stretch reads EPRISRDELRE. Positions 50 to 71 are disordered; the sequence is EPRISRDELRETASSPVTFETR. Residues 224–247 form a C2H2-type zinc finger; it reads YKCKQCDYLDYRKSTMRKHTVSQH.

In terms of tissue distribution, expressed in FLP neurons.

The protein localises to the nucleus. In terms of biological role, positively regulates the RNA polymerase III-associated transcription of small non-coding RNAs. In Caenorhabditis elegans, this protein is Transcription factor lir-3.